Consider the following 160-residue polypeptide: MKLQVLPLSQEAFSAYGDVIETQQRDFFHINNGLVERYHDLALVEILEQDRTLISINRAQPANLPLTIHELERHPLGTQAFIPMKGEVFVVVVALGDDKPDLSTLRAFITNGEQGVNYHRNVWHHPLFAWQRVTDFLTIDRGGSDNCDVESIPEQELCFA.

It belongs to the ureidoglycolate lyase family. In terms of assembly, homodimer. Ni(2+) serves as cofactor.

The catalysed reaction is (S)-ureidoglycolate = urea + glyoxylate. It participates in nitrogen metabolism; (S)-allantoin degradation. Catalyzes the catabolism of the allantoin degradation intermediate (S)-ureidoglycolate, generating urea and glyoxylate. Involved in the anaerobic utilization of allantoin as sole nitrogen source. Reinforces the induction of genes involved in the degradation of allantoin and glyoxylate by producing glyoxylate. This is Ureidoglycolate lyase from Shigella flexneri serotype 5b (strain 8401).